Reading from the N-terminus, the 681-residue chain is NADH-quinone oxidoreductase subunit G (681 aa).

Residues 1–78 (MIKLTIDGQE…GMVIHTDTPM (78 aa)) enclose the 2Fe-2S ferredoxin-type domain. [2Fe-2S] cluster-binding residues include C34, C45, C48, and C62. In terms of domain architecture, 4Fe-4S His(Cys)3-ligated-type spans 78 to 117 (MVKKAREGVMEFLLVNHPLDCPICDQGGECDLQDQAFRYG). H94, C98, C101, C107, C146, C149, C152, and C196 together coordinate [4Fe-4S] cluster. The 4Fe-4S Mo/W bis-MGD-type domain occupies 215-271 (LRHTASIGVHDAEGSNIRIDSRGDEVMRVLPRVNEEINEEWLSDKNRFSYDGLKYQR).

The protein belongs to the complex I 75 kDa subunit family. It depends on [2Fe-2S] cluster as a cofactor. [4Fe-4S] cluster is required as a cofactor.

It carries out the reaction a quinone + NADH + 5 H(+)(in) = a quinol + NAD(+) + 4 H(+)(out). In terms of biological role, NDH-1 shuttles electrons from NADH, via FMN and iron-sulfur (Fe-S) centers, to quinones in the respiratory chain. Couples the redox reaction to proton translocation (for every two electrons transferred, four hydrogen ions are translocated across the cytoplasmic membrane), and thus conserves the redox energy in a proton gradient. This chain is NADH-quinone oxidoreductase subunit G (nuoG), found in Rickettsia bellii (strain RML369-C).